The chain runs to 271 residues: ATP synthase subunit a (271 aa).

The next 5 membrane-spanning stretches (helical) occupy residues 40–60, 100–120, 146–166, 220–240, and 242–262; these read TINIDSMFFSVVLGLLFLVLF, LIAPLALTIFVWVFLMNLMDL, DVNVTLSMALGVFILILFYSI, LIFILIAGLLPWWSQWILNVP, and AIFHILIITLQAFIFMVLTIV.

This sequence belongs to the ATPase A chain family. F-type ATPases have 2 components, CF(1) - the catalytic core - and CF(0) - the membrane proton channel. CF(1) has five subunits: alpha(3), beta(3), gamma(1), delta(1), epsilon(1). CF(0) has three main subunits: a(1), b(2) and c(9-12). The alpha and beta chains form an alternating ring which encloses part of the gamma chain. CF(1) is attached to CF(0) by a central stalk formed by the gamma and epsilon chains, while a peripheral stalk is formed by the delta and b chains.

It localises to the cell inner membrane. Its function is as follows. Key component of the proton channel; it plays a direct role in the translocation of protons across the membrane. The sequence is that of ATP synthase subunit a from Escherichia coli O1:K1 / APEC.